The primary structure comprises 464 residues: RCC1-like G exchanging factor-like protein (464 aa).

Residues 1-37 (MALVALVAGARLGRRLSGPGLGRGHWTAAGRSRSRRE) constitute a mitochondrion transit peptide. RCC1 repeat units lie at residues 58 to 124 (ADRV…LSSK), 128 to 191 (VTKV…VLTD), 193 to 247 (EGVF…FLTD), 248 to 300 (KGEV…AVSA), 302 to 353 (GGLF…VLNG), 354 to 411 (EGHV…ALTN), and 412 to 461 (KGEL…TLAK).

As to quaternary structure, forms a regulatory protein-RNA complex, consisting of RCC1L, NGRN, RPUSD3, RPUSD4, TRUB2, FASTKD2 and 16S mt-rRNA. Interacts with 16S mt-rRNA; this interaction is direct. Interacts with OPA1; this interaction is direct. In terms of assembly, asociates with the mitochondrial ribosome large subunit (mt-LSU). Asociates with the mitochondrial ribosome small subunit (mt-SSU). In terms of tissue distribution, ubiquitous.

The protein localises to the mitochondrion membrane. Its subcellular location is the mitochondrion inner membrane. Its function is as follows. Guanine nucleotide exchange factor (GEF) for mitochondrial dynamin-related GTPase OPA1. Activates OPA1, by exchanging bound GDP for free GTP, and drives OPA1 and MFN1-dependent mitochondrial fusion. Plays an essential role in mitochondrial ribosome biogenesis. As a component of a functional protein-RNA module, consisting of RCC1L, NGRN, RPUSD3, RPUSD4, TRUB2, FASTKD2 and 16S mitochondrial ribosomal RNA (16S mt-rRNA), controls 16S mt-rRNA abundance and is required for intra-mitochondrial translation of core subunits of the oxidative phosphorylation system. Plays an essential role in mitochondrial ribosome biogenesis via its association with GTPases that play a role in the assembly of the large ribosome subunit. Functionally, plays an essential role in mitochondrial ribosome biogenesis via its association with GTPases that play a role in the assembly of the small ribosome subunit. The chain is RCC1-like G exchanging factor-like protein from Homo sapiens (Human).